The chain runs to 382 residues: Leucine carboxyl methyltransferase 1 (382 aa).

Polar residues predominate over residues 1–11; it reads MSAPQIPNLNT. A disordered region spans residues 1–45; that stretch reads MSAPQIPNLNTLRRGGGRGRFRARGGPDSSSSSGNKDRVVQGTDN. S-adenosyl-L-methionine-binding positions include arginine 88, glycine 121, aspartate 146, 193 to 194, and glutamate 230; that span reads DL.

Belongs to the methyltransferase superfamily. LCMT family.

It carries out the reaction [phosphatase 2A protein]-C-terminal L-leucine + S-adenosyl-L-methionine = [phosphatase 2A protein]-C-terminal L-leucine methyl ester + S-adenosyl-L-homocysteine. Methylates the carboxyl group of the C-terminal leucine residue of protein phosphatase 2A catalytic subunits to form alpha-leucine ester residues. This is Leucine carboxyl methyltransferase 1 (ppm1) from Emericella nidulans (strain FGSC A4 / ATCC 38163 / CBS 112.46 / NRRL 194 / M139) (Aspergillus nidulans).